Reading from the N-terminus, the 209-residue chain is MGTVNSLEAGIDEAGRGPVIGPMVIAIVGWSNSEAEGIGVKDSKQLTPSGRSRLYKLIVSKAPCVRHVIVEPSEIDYYVNRGLLNELEAIKMSELIKACSGVTRVYVDSPDPNPSRFRGFINVKDVELIVLNHADESIPLVSAASIVAKVIRDTIISRLKETYGDFGSGYPSDPRTISALRRWINNGTLPPIVRRSWRTIKRMTNSRLF.

In terms of domain architecture, RNase H type-2 spans Ser6–Phe209. 3 residues coordinate a divalent metal cation: Asp12, Glu13, and Asp108.

This sequence belongs to the RNase HII family. The cofactor is Mn(2+). Requires Mg(2+) as cofactor.

Its subcellular location is the cytoplasm. It catalyses the reaction Endonucleolytic cleavage to 5'-phosphomonoester.. Endonuclease that specifically degrades the RNA of RNA-DNA hybrids. The polypeptide is Ribonuclease HII (Caldivirga maquilingensis (strain ATCC 700844 / DSM 13496 / JCM 10307 / IC-167)).